The sequence spans 1379 residues: Hepatocyte growth factor receptor (1379 aa).

A signal peptide spans 1-24; it reads MKAPTVLAPGILVLLLSLVQRSHG. Residues 25-931 lie on the Extracellular side of the membrane; sequence ECKEALVKSE…VIVQPDQNFA (907 aa). The region spanning 27 to 514 is the Sema domain; sequence KEALVKSEMN…TGKKITKIPL (488 aa). Asn-45 carries N-linked (GlcNAc...) asparagine glycosylation. 4 disulfides stabilise this stretch: Cys-95/Cys-101, Cys-98/Cys-160, Cys-133/Cys-141, and Cys-171/Cys-174. Residue Asn-106 is glycosylated (N-linked (GlcNAc...) asparagine). Asn-201 and Asn-357 each carry an N-linked (GlcNAc...) asparagine glycan. Disulfide bonds link Cys-297/Cys-362 and Cys-384/Cys-396. Asn-398 and Asn-404 each carry an N-linked (GlcNAc...) asparagine glycan. 4 disulfide bridges follow: Cys-519–Cys-537, Cys-525–Cys-560, Cys-528–Cys-544, and Cys-540–Cys-550. IPT/TIG domains lie at 562–654, 656–738, and 741–835; these read PAVY…FSYV, PVIT…FSYR, and PVVY…LTYV. The O-linked (Man) threonine glycan is linked to Thr-581. 2 N-linked (GlcNAc...) asparagine glycosylation sites follow: Asn-606 and Asn-634. Thr-675 and Thr-760 each carry an O-linked (Man) threonine glycan. N-linked (GlcNAc...) asparagine glycans are attached at residues Asn-784 and Asn-878. Residues 932 to 954 form a helical membrane-spanning segment; that stretch reads GLIIGAVSISVVVLLLSGLFLWM. The Cytoplasmic segment spans residues 955 to 1379; that stretch reads RKRKHKDLGS…QDNIDGEGNT (425 aa). Ser-964 is subject to Phosphoserine. At Thr-975 the chain carries Phosphothreonine. 3 positions are modified to phosphoserine: Ser-988, Ser-995, and Ser-998. Tyr-1001 carries the post-translational modification Phosphotyrosine. The Protein kinase domain maps to 1076 to 1343; sequence VHFNEVIGRG…RISSIFSTFI (268 aa). Residues 1082-1090 and Lys-1108 contribute to the ATP site; that span reads IGRGHFGCV. Asp-1202 acts as the Proton acceptor in catalysis. The segment at 1210–1379 is interaction with RANBP9; it reads LDEKFTVKVA…QDNIDGEGNT (170 aa). A Phosphotyrosine modification is found at Tyr-1228. Residues Tyr-1232 and Tyr-1233 each carry the phosphotyrosine; by autocatalysis modification. At Thr-1287 the chain carries Phosphothreonine. The segment at 1318–1357 is interaction with MUC20; that stretch reads WHPKAEMRPSFSELVSRISSIFSTFIGEHYVHVNATYVNV. A phosphotyrosine; by autocatalysis mark is found at Tyr-1347 and Tyr-1354. Tyr-1363 carries the post-translational modification Phosphotyrosine.

It belongs to the protein kinase superfamily. Tyr protein kinase family. Heterodimer made of an alpha chain (50 kDa) and a beta chain (145 kDa) which are disulfide linked. Binds PLXNB1. Interacts when phosphorylated with downstream effectors including STAT3, PIK3R1, SRC, PCLG1, GRB2 and GAB1. When phosphorylated at Tyr-1354, interacts with INPPL1/SHIP2. Interacts with RANBP9 and RANBP10. Interacts with INPP5D/SHIP1. Interacts with SPSB1, SPSB2, SPSB4 and probably SPSB3. SPSB1 binding occurs in the presence and in the absence of HGF, however HGF treatment has a positive effect on this interaction. Interacts with MUC20; prevents interaction with GRB2 and suppresses hepatocyte growth factor-induced cell proliferation. Interacts with GRB10. Interacts with PTPN1 and PTPN2. Interacts with HSP90AA1 and HSP90AB1; the interaction suppresses MET kinase activity. Interacts with tensin TNS3. Interacts (when phosphorylated) with tensin TNS4 (via SH2 domain); the interaction increases MET protein stability by inhibiting MET endocytosis and subsequent lysosomal degradation. As to quaternary structure, (Microbial infection) Interacts with L.monocytogenes InlB. InlB probably dimerizes upon binding to MET, which encourages subsequent dimerization of MET. Autophosphorylated in response to ligand binding on Tyr-1232 and Tyr-1233 in the kinase domain leading to further phosphorylation of Tyr-1347 and Tyr-1354 in the C-terminal multifunctional docking site. Dephosphorylated by PTPRJ at Tyr-1347 and Tyr-1363. Dephosphorylated by PTPN1 and PTPN2. Post-translationally, ubiquitinated. Ubiquitination by CBL regulates MET endocytosis, resulting in decreasing plasma membrane receptor abundance, and in endosomal degradation and/or recycling of internalized receptors. In terms of processing, O-mannosylation of IPT/TIG domains by TMEM260 is required for protein maturation. O-mannosylated residues are composed of single mannose glycans that are not elongated or modified. (Microbial infection) Tyrosine phosphorylation is stimulated by L.monocytogenes InlB.

The protein localises to the membrane. The enzyme catalyses L-tyrosyl-[protein] + ATP = O-phospho-L-tyrosyl-[protein] + ADP + H(+). With respect to regulation, in its inactive state, the C-terminal tail interacts with the catalytic domain and inhibits the kinase activity. Upon ligand binding, the C-terminal tail is displaced and becomes phosphorylated, thus increasing the kinase activity. Its function is as follows. Receptor tyrosine kinase that transduces signals from the extracellular matrix into the cytoplasm by binding to hepatocyte growth factor/HGF ligand. Regulates many physiological processes including proliferation, scattering, morphogenesis and survival. Ligand binding at the cell surface induces autophosphorylation of MET on its intracellular domain that provides docking sites for downstream signaling molecules. Following activation by ligand, interacts with the PI3-kinase subunit PIK3R1, PLCG1, SRC, GRB2, STAT3 or the adapter GAB1. Recruitment of these downstream effectors by MET leads to the activation of several signaling cascades including the RAS-ERK, PI3 kinase-AKT, or PLCgamma-PKC. The RAS-ERK activation is associated with the morphogenetic effects while PI3K/AKT coordinates prosurvival effects. During embryonic development, MET signaling plays a role in gastrulation, development and migration of neuronal precursors, angiogenesis and kidney formation. During skeletal muscle development, it is crucial for the migration of muscle progenitor cells and for the proliferation of secondary myoblasts. In adults, participates in wound healing as well as organ regeneration and tissue remodeling. Also promotes differentiation and proliferation of hematopoietic cells. May regulate cortical bone osteogenesis. In terms of biological role, (Microbial infection) Acts as a receptor for Listeria monocytogenes internalin InlB, mediating entry of the pathogen into cells. The chain is Hepatocyte growth factor receptor (Met) from Mus musculus (Mouse).